The primary structure comprises 857 residues: DNA mismatch repair protein MutS (857 aa).

G608–S615 is a binding site for ATP.

It belongs to the DNA mismatch repair MutS family.

Functionally, this protein is involved in the repair of mismatches in DNA. It is possible that it carries out the mismatch recognition step. This protein has a weak ATPase activity. The polypeptide is DNA mismatch repair protein MutS (Lacticaseibacillus paracasei (strain ATCC 334 / BCRC 17002 / CCUG 31169 / CIP 107868 / KCTC 3260 / NRRL B-441) (Lactobacillus paracasei)).